The chain runs to 138 residues: MLIPRRVKHRKQHHPSRSGAAKGGTQVTFGDYGIQALEPAYITNRQIESARIAMTRHIKRGGKIWINIFPDRPLTKKPAETRMGSGKGSPEWWIANVKPGRVMFEMSYPNEEIAREALRRAMHKLPCKCRIVTREEQF.

Positions 1–16 are enriched in basic residues; that stretch reads MLIPRRVKHRKQHHPS. Positions 1-25 are disordered; it reads MLIPRRVKHRKQHHPSRSGAAKGGT.

This sequence belongs to the universal ribosomal protein uL16 family. Part of the 50S ribosomal subunit.

In terms of biological role, binds 23S rRNA and is also seen to make contacts with the A and possibly P site tRNAs. The sequence is that of Large ribosomal subunit protein uL16 from Rhodococcus jostii (strain RHA1).